The following is a 209-amino-acid chain: Uridine kinase (209 aa).

12–19 (GGSASGKT) is a binding site for ATP.

Belongs to the uridine kinase family.

It localises to the cytoplasm. The catalysed reaction is uridine + ATP = UMP + ADP + H(+). It catalyses the reaction cytidine + ATP = CMP + ADP + H(+). It functions in the pathway pyrimidine metabolism; CTP biosynthesis via salvage pathway; CTP from cytidine: step 1/3. It participates in pyrimidine metabolism; UMP biosynthesis via salvage pathway; UMP from uridine: step 1/1. This is Uridine kinase from Chloroflexus aurantiacus (strain ATCC 29366 / DSM 635 / J-10-fl).